The sequence spans 446 residues: Chromosomal replication initiator protein DnaA (446 aa).

The tract at residues 1 to 81 (MENISDLWNS…AKLAIRFIIP (81 aa)) is domain I, interacts with DnaA modulators. The interval 81–109 (PQSQAEEDIDLPSVKQKHAHDESNHLPQS) is domain II. Residues 110–326 (MLNPKYTFDT…GALIRVVAYS (217 aa)) form a domain III, AAA+ region region. G154, G156, K157, and T158 together coordinate ATP. The segment at 327–446 (SLINKDMNAD…HVEEVKDILK (120 aa)) is domain IV, binds dsDNA.

It belongs to the DnaA family. Oligomerizes as a right-handed, spiral filament on DNA at oriC.

It localises to the cytoplasm. In terms of biological role, plays an essential role in the initiation and regulation of chromosomal replication. ATP-DnaA binds to the origin of replication (oriC) to initiate formation of the DNA replication initiation complex once per cell cycle. Binds the DnaA box (a 9 base pair repeat at the origin) and separates the double-stranded (ds)DNA. Forms a right-handed helical filament on oriC DNA; dsDNA binds to the exterior of the filament while single-stranded (ss)DNA is stabiized in the filament's interior. The ATP-DnaA-oriC complex binds and stabilizes one strand of the AT-rich DNA unwinding element (DUE), permitting loading of DNA polymerase. After initiation quickly degrades to an ADP-DnaA complex that is not apt for DNA replication. Binds acidic phospholipids. In Bacillus mycoides (strain KBAB4) (Bacillus weihenstephanensis), this protein is Chromosomal replication initiator protein DnaA.